A 168-amino-acid polypeptide reads, in one-letter code: Large ribosomal subunit protein uL10 (168 aa).

The protein belongs to the universal ribosomal protein uL10 family. As to quaternary structure, part of the ribosomal stalk of the 50S ribosomal subunit. The N-terminus interacts with L11 and the large rRNA to form the base of the stalk. The C-terminus forms an elongated spine to which L12 dimers bind in a sequential fashion forming a multimeric L10(L12)X complex.

Forms part of the ribosomal stalk, playing a central role in the interaction of the ribosome with GTP-bound translation factors. This Photorhabdus laumondii subsp. laumondii (strain DSM 15139 / CIP 105565 / TT01) (Photorhabdus luminescens subsp. laumondii) protein is Large ribosomal subunit protein uL10.